Consider the following 246-residue polypeptide: Cell division protein ZapD (246 aa).

It belongs to the ZapD family. In terms of assembly, interacts with FtsZ.

It is found in the cytoplasm. In terms of biological role, cell division factor that enhances FtsZ-ring assembly. Directly interacts with FtsZ and promotes bundling of FtsZ protofilaments, with a reduction in FtsZ GTPase activity. The protein is Cell division protein ZapD of Vibrio vulnificus (strain CMCP6).